The primary structure comprises 160 residues: Cyclic pyranopterin monophosphate synthase (160 aa).

Residues 75–77 and 113–114 each bind substrate; these read LCH and ME. D128 is a catalytic residue.

Belongs to the MoaC family. In terms of assembly, homohexamer; trimer of dimers.

The enzyme catalyses (8S)-3',8-cyclo-7,8-dihydroguanosine 5'-triphosphate = cyclic pyranopterin phosphate + diphosphate. Its pathway is cofactor biosynthesis; molybdopterin biosynthesis. Its function is as follows. Catalyzes the conversion of (8S)-3',8-cyclo-7,8-dihydroguanosine 5'-triphosphate to cyclic pyranopterin monophosphate (cPMP). This chain is Cyclic pyranopterin monophosphate synthase, found in Ruthia magnifica subsp. Calyptogena magnifica.